The sequence spans 104 residues: Protein RnfH (104 aa).

This sequence belongs to the UPF0125 (RnfH) family.

The chain is Protein RnfH from Pseudomonas savastanoi pv. phaseolicola (strain 1448A / Race 6) (Pseudomonas syringae pv. phaseolicola (strain 1448A / Race 6)).